Consider the following 249-residue polypeptide: MNRNDKQAYDRGTSLFSPDGRIYQVEYAREAVKRGAPVLGVRTADGVVLAALRSTPSELMEAESIEKLHKLDDALGAATAGHVADARKLVDFARTTAQREHLRYGEPIGVETLTKTITDNIQESTQSGGTRPYGASLLIGGVENGSGRLFATDPSGTPQEWKAVAIGGHREDVQAALEDGYAEDLSLEDGLALAVEALVAADEEIESDELNLVTVSEAGYEIVDEETIAELFADATADDESDETDEREE.

Met-1 carries the post-translational modification N-acetylmethionine.

Belongs to the peptidase T1A family. As to quaternary structure, the 20S proteasome core is composed of 14 alpha and 14 beta subunits that assemble into four stacked heptameric rings, resulting in a barrel-shaped structure. The two inner rings, each composed of seven catalytic beta subunits, are sandwiched by two outer rings, each composed of seven alpha subunits. H.volcanii produces at least 2 types of 20S proteasomes: an alpha1-beta proteasome and a proteasome containing all three subunits (alpha1, alpha2, and beta) that appears to be asymmetrical with homo-oligomeric alpha1 and alpha2 rings positioned on separate ends. The catalytic chamber with the active sites is on the inside of the barrel. Has probably a gated structure, the ends of the cylinder being occluded by the N-termini of the alpha-subunits. Is likely capped at one or both ends by the proteasome regulatory ATPase, PAN.

The protein resides in the cytoplasm. Its activity is regulated as follows. The formation of the proteasomal ATPase PAN-20S proteasome complex, via the docking of the C-termini of PAN into the intersubunit pockets in the alpha-rings, triggers opening of the gate for substrate entry. Interconversion between the open-gate and close-gate conformations leads to a dynamic regulation of the 20S proteasome proteolysis activity. Functionally, component of the proteasome core, a large protease complex with broad specificity involved in protein degradation. The H.volcanii alpha1-beta-alpha2 proteasome is able to cleave oligopeptides after Tyr and thus displays chymotrypsin-like activity. This chain is Proteasome subunit alpha 2, found in Haloferax volcanii (strain ATCC 29605 / DSM 3757 / JCM 8879 / NBRC 14742 / NCIMB 2012 / VKM B-1768 / DS2) (Halobacterium volcanii).